The sequence spans 465 residues: Adenosylhomocysteinase (465 aa).

Residues Thr56, Asp131, and Glu191 each coordinate substrate. Position 192–194 (192–194 (TTT)) interacts with NAD(+). Substrate contacts are provided by Lys221 and Asp225. Residues Asn226, 255 to 260 (GYGDVG), Glu278, Asn313, 334 to 336 (IGH), and Asn379 contribute to the NAD(+) site.

Belongs to the adenosylhomocysteinase family. Requires NAD(+) as cofactor.

The protein resides in the cytoplasm. The enzyme catalyses S-adenosyl-L-homocysteine + H2O = L-homocysteine + adenosine. The protein operates within amino-acid biosynthesis; L-homocysteine biosynthesis; L-homocysteine from S-adenosyl-L-homocysteine: step 1/1. May play a key role in the regulation of the intracellular concentration of adenosylhomocysteine. This Chelativorans sp. (strain BNC1) protein is Adenosylhomocysteinase.